The following is a 317-amino-acid chain: Acetyl-coenzyme A carboxylase carboxyl transferase subunit alpha (317 aa).

A CoA carboxyltransferase C-terminal domain is found at 40–294 (RLQKKSEELT…KARLLTDLED (255 aa)).

Belongs to the AccA family. In terms of assembly, acetyl-CoA carboxylase is a heterohexamer composed of biotin carboxyl carrier protein (AccB), biotin carboxylase (AccC) and two subunits each of ACCase subunit alpha (AccA) and ACCase subunit beta (AccD).

It is found in the cytoplasm. The enzyme catalyses N(6)-carboxybiotinyl-L-lysyl-[protein] + acetyl-CoA = N(6)-biotinyl-L-lysyl-[protein] + malonyl-CoA. Its pathway is lipid metabolism; malonyl-CoA biosynthesis; malonyl-CoA from acetyl-CoA: step 1/1. Component of the acetyl coenzyme A carboxylase (ACC) complex. First, biotin carboxylase catalyzes the carboxylation of biotin on its carrier protein (BCCP) and then the CO(2) group is transferred by the carboxyltransferase to acetyl-CoA to form malonyl-CoA. The sequence is that of Acetyl-coenzyme A carboxylase carboxyl transferase subunit alpha from Actinobacillus succinogenes (strain ATCC 55618 / DSM 22257 / CCUG 43843 / 130Z).